The primary structure comprises 245 residues: Fibroblast growth factor 13 (245 aa).

Residues 1–36 (MAAAIASSLIRQKRQAREREKSNACKCVSSPSKGKT) are disordered. The mediates targeting to the nucleus stretch occupies residues 1 to 62 (MAAAIASSLI…GSKKRRRRRP (62 aa)). The segment at 67–201 (KGIVTKLYSR…AHFLPKPLKV (135 aa)) is mediates interaction with sodium channels. Residue S208 is modified to Phosphoserine. Residues 213 to 245 (TEFSRSGSGTPTKSRSVSGVLNGGKSMSHNEST) form a disordered region. Residues 215 to 245 (FSRSGSGTPTKSRSVSGVLNGGKSMSHNEST) are compositionally biased toward polar residues.

The protein belongs to the heparin-binding growth factors family. Interacts with SCN8A; regulates SCN8A activity. Interacts with SCN1A; may regulate SCN1A activity. Interacts with SCN5A; the interaction is direct and may regulate SNC5A density at membranes and function. May also interact with SCN2A and SCN11A. Interacts with MAPK8IP2; may regulate the MAPK8IP2 scaffolding activity. In terms of processing, may be phosphorylated. As to expression, ubiquitously expressed. Predominantly expressed in the nervous system.

The protein resides in the nucleus. The protein localises to the cytoplasm. It localises to the cell projection. Its subcellular location is the filopodium. It is found in the growth cone. The protein resides in the dendrite. The protein localises to the cell membrane. It localises to the sarcolemma. Its function is as follows. Microtubule-binding protein which directly binds tubulin and is involved in both polymerization and stabilization of microtubules. Through its action on microtubules, may participate in the refinement of axons by negatively regulating axonal and leading processes branching. Plays a crucial role in neuron polarization and migration in the cerebral cortex and the hippocampus. Regulates voltage-gated sodium channel transport and function. May also play a role in MAPK signaling. Required for the development of axonal initial segment-targeting inhibitory GABAergic synapses made by chandelier neurons. The protein is Fibroblast growth factor 13 of Homo sapiens (Human).